Here is a 493-residue protein sequence, read N- to C-terminus: MEQPAPKSKLKKLSEDSLTKQPEEVFDVLEKLGEGSYGSVFKAIHKESGQVVAIKQVPVESDLQEIIKEISIMQQCDSHYVVKYYGSYFKNTDLWIVMEYCGAGSVSDIIRLRNKTLTEDEIATILRSTLKGLEYLHFMRKIHRDIKAGNILLNTEGHAKLADFGVAGQLTDTMAKRNTVIGTPFWMAPEVIQEIGYNCVADIWSLGITSIEMAEGKPPYADIHPMRAIFMIPTNPPPTFRKPELWTDEFTDFVKKCLVKNPEQRATATQLLQHPFIKNAKPVSILRDLITEAMDIKAKRHEELQRELEEEDENSEEDELDSHTMVKTNSESAGTMRAASTMSEGAQTMIEHNSTMLESDLGTMVINSDDEEEEEEEDGTMKRNATSPQGPRPSFMDYFDKQDSKNKPHDNCNQNLHEQYHISKNVFPDNWKVPPDGDFDFLKNLSFEELQMRLKALDPMMEREIEDLRQRYNAKRQPILDAMDAKKRRQQNF.

The Protein kinase domain maps to 26–277 (FDVLEKLGEG…ATQLLQHPFI (252 aa)). Residues 32-40 (LGEGSYGSV) and K55 each bind ATP. D145 functions as the Proton acceptor in the catalytic mechanism. T179 carries the post-translational modification Phosphothreonine; by autocatalysis. A coiled-coil region spans residues 286–327 (LRDLITEAMDIKAKRHEELQRELEEEDENSEEDELDSHTMVK). 2 disordered regions span residues 303–336 (ELQRELEEEDENSEEDELDSHTMVKTNSESAGTM) and 369–414 (DDEE…NCNQ). Residues 308–320 (LEEEDENSEEDEL) show a composition bias toward acidic residues. Over residues 325–336 (MVKTNSESAGTM) the composition is skewed to polar residues. A compositionally biased stretch (acidic residues) spans 369-378 (DDEEEEEEED). The segment covering 398 to 410 (YFDKQDSKNKPHD) has biased composition (basic and acidic residues). An SARAH domain is found at 439-486 (FDFLKNLSFEELQMRLKALDPMMEREIEDLRQRYNAKRQPILDAMDAK). Residues 444–477 (NLSFEELQMRLKALDPMMEREIEDLRQRYNAKRQ) are a coiled coil.

This sequence belongs to the protein kinase superfamily. STE Ser/Thr protein kinase family. STE20 subfamily. Homodimer; mediated via the coiled-coil region. Mg(2+) is required as a cofactor.

Its subcellular location is the cytoplasm. The protein resides in the nucleus. It carries out the reaction L-seryl-[protein] + ATP = O-phospho-L-seryl-[protein] + ADP + H(+). It catalyses the reaction L-threonyl-[protein] + ATP = O-phospho-L-threonyl-[protein] + ADP + H(+). With respect to regulation, inhibited by the C-terminal non-catalytic region. Activated by caspase-cleavage. Full activation also requires homodimerization and autophosphorylation of Thr-179. Stress-activated, pro-apoptotic kinase which, following caspase-cleavage, enters the nucleus and induces chromatin condensation followed by internucleosomal DNA fragmentation. Key component of the Hippo signaling pathway which plays a pivotal role in organ size control and tumor suppression by restricting proliferation and promoting apoptosis. The core of this pathway is composed of a kinase cascade wherein stk3/mst2 and stk4/mst1, in complex with its regulatory protein sav1, phosphorylates and activates lats1/2 in complex with its regulatory protein mob1, which in turn phosphorylates and inactivates yap1 oncoprotein and wwtr1/taz. Phosphorylation of yap1 by lats2 inhibits its translocation into the nucleus to regulate cellular genes important for cell proliferation, cell death, and cell migration. This chain is Serine/threonine-protein kinase 3 (stk3), found in Xenopus laevis (African clawed frog).